A 67-amino-acid polypeptide reads, in one-letter code: Large ribosomal subunit protein uL29 (67 aa).

The protein belongs to the universal ribosomal protein uL29 family.

This Desulforudis audaxviator (strain MP104C) protein is Large ribosomal subunit protein uL29.